A 224-amino-acid chain; its full sequence is Cysteine-rich hydrophobic domain-containing protein 1 (224 aa).

The interval 1–80 (MSILLPNMAE…PPPRVVSEEH (80 aa)) is disordered. Residues 13–25 (TISELEEEEEEEA) are compositionally biased toward acidic residues. The span at 26 to 40 (ATSSSSPSSSSSVSG) shows a compositional bias: low complexity. A compositionally biased stretch (acidic residues) spans 41-69 (PDDDEEDEEEEEEEEEEEEEEEEEEEEEA). A coiled-coil region spans residues 42–70 (DDDEEDEEEEEEEEEEEEEEEEEEEEEAP).

It belongs to the CHIC family. Post-translationally, palmitoylated. In terms of tissue distribution, equally expressed in various parts of the brain.

The protein resides in the cell membrane. It localises to the cytoplasmic vesicle. The chain is Cysteine-rich hydrophobic domain-containing protein 1 (CHIC1) from Homo sapiens (Human).